The following is a 97-amino-acid chain: uncharacterized protein (97 aa).

This is an uncharacterized protein from Orgyia pseudotsugata multicapsid polyhedrosis virus (OpMNPV).